Consider the following 590-residue polypeptide: Aspartate--tRNA(Asp/Asn) ligase (590 aa).

Position 175 (Glu175) interacts with L-aspartate. The interval 199–202 (QQYK) is aspartate. L-aspartate contacts are provided by Arg221 and His450. 221 to 223 (RDE) contacts ATP. An ATP-binding site is contributed by Glu484. Arg491 provides a ligand contact to L-aspartate. 536–539 (GVDR) serves as a coordination point for ATP.

This sequence belongs to the class-II aminoacyl-tRNA synthetase family. Type 1 subfamily. In terms of assembly, homodimer.

The protein resides in the cytoplasm. It carries out the reaction tRNA(Asx) + L-aspartate + ATP = L-aspartyl-tRNA(Asx) + AMP + diphosphate. Aspartyl-tRNA synthetase with relaxed tRNA specificity since it is able to aspartylate not only its cognate tRNA(Asp) but also tRNA(Asn). Reaction proceeds in two steps: L-aspartate is first activated by ATP to form Asp-AMP and then transferred to the acceptor end of tRNA(Asp/Asn). This chain is Aspartate--tRNA(Asp/Asn) ligase, found in Bradyrhizobium sp. (strain ORS 278).